The primary structure comprises 459 residues: Probable D-serine dehydratase (459 aa).

Lys119 is subject to N6-(pyridoxal phosphate)lysine.

It belongs to the serine/threonine dehydratase family. DsdA subfamily. Pyridoxal 5'-phosphate serves as cofactor.

It catalyses the reaction D-serine = pyruvate + NH4(+). In Geobacillus stearothermophilus (Bacillus stearothermophilus), this protein is Probable D-serine dehydratase.